The primary structure comprises 238 residues: Ribonuclease PH (238 aa).

Phosphate contacts are provided by residues arginine 86 and 124–126 (GTR).

The protein belongs to the RNase PH family. In terms of assembly, homohexameric ring arranged as a trimer of dimers.

It carries out the reaction tRNA(n+1) + phosphate = tRNA(n) + a ribonucleoside 5'-diphosphate. In terms of biological role, phosphorolytic 3'-5' exoribonuclease that plays an important role in tRNA 3'-end maturation. Removes nucleotide residues following the 3'-CCA terminus of tRNAs; can also add nucleotides to the ends of RNA molecules by using nucleoside diphosphates as substrates, but this may not be physiologically important. Probably plays a role in initiation of 16S rRNA degradation (leading to ribosome degradation) during starvation. The protein is Ribonuclease PH of Proteus mirabilis (strain HI4320).